A 979-amino-acid polypeptide reads, in one-letter code: Oncostatin-M-specific receptor subunit beta (979 aa).

The signal sequence occupies residues 1–27 (MALFAVFQTTFFLTLLSLRTYQSEVLA). Residues 28-740 (ERLPLTPVSL…VTTPDEHSSM (713 aa)) are Extracellular-facing. Asparagine 163 carries N-linked (GlcNAc...) asparagine glycosylation. Cysteine 245 and cysteine 255 are oxidised to a cystine. N-linked (GlcNAc...) asparagine glycans are attached at residues asparagine 326 and asparagine 380. Fibronectin type-III domains are found at residues 335–428 (NPFS…TLEA), 433–528 (APDV…DPEN), 529–623 (KEVE…SQEL), and 625–736 (PSDN…TPDE). The WSXWS motif motif lies at 415 to 419 (WSEWS). Residues asparagine 446 and asparagine 580 are each glycosylated (N-linked (GlcNAc...) asparagine). The chain crosses the membrane as a helical span at residues 741–761 (LIHILLPMVFCVLLIMVMCYL). Residues 762 to 979 (KSQWIKETCY…TLLDPGEHYC (218 aa)) are Cytoplasmic-facing. The Box 1 motif motif lies at 770-778 (CYPDIPDPY). Serine 826 and serine 889 each carry phosphoserine.

This sequence belongs to the type I cytokine receptor family. Type 2 subfamily. In terms of assembly, heterodimer composed of OSMR and IL6ST (type II OSM receptor). Heterodimer with IL31RA to form the IL31 receptor. In terms of tissue distribution, expressed in keratinocytes (at protein level). Expressed at relatively high levels in all neural cells as well as fibroblast and epithelial cells.

It is found in the membrane. Its function is as follows. Associates with IL31RA to form the IL31 receptor. Binds IL31 to activate STAT3 and possibly STAT1 and STAT5. Capable of transducing OSM-specific signaling events. The sequence is that of Oncostatin-M-specific receptor subunit beta (OSMR) from Homo sapiens (Human).